Here is a 405-residue protein sequence, read N- to C-terminus: Tyrosine--tRNA ligase (405 aa).

Residue tyrosine 35 coordinates L-tyrosine. The 'HIGH' region signature appears at 40-49; it reads ATSSSLHIGH. L-tyrosine-binding residues include tyrosine 166 and glutamine 170. Positions 226–230 match the 'KMSKS' region motif; it reads KMGKS. Lysine 229 contacts ATP. An S4 RNA-binding domain is found at 340–404; sequence VLLINLMLDS…VGKKKFLRIV (65 aa).

It belongs to the class-I aminoacyl-tRNA synthetase family. TyrS type 1 subfamily. As to quaternary structure, homodimer.

The protein localises to the cytoplasm. It catalyses the reaction tRNA(Tyr) + L-tyrosine + ATP = L-tyrosyl-tRNA(Tyr) + AMP + diphosphate + H(+). Its function is as follows. Catalyzes the attachment of tyrosine to tRNA(Tyr) in a two-step reaction: tyrosine is first activated by ATP to form Tyr-AMP and then transferred to the acceptor end of tRNA(Tyr). This Borreliella afzelii (strain PKo) (Borrelia afzelii) protein is Tyrosine--tRNA ligase.